We begin with the raw amino-acid sequence, 364 residues long: MTRMLPEPAYRHGSVGKIGVLMINLGTPDAPTAKALRAYLKQFLSEPRIVEFPRWLWWFILNGIILNVRPAKSAKKYEQIWTSEGSPLRVHTARQTALVAALLEQQADSSLVVEYAMIIGNPSIAEKLQQMKVQGCDRILVLPLFPQYAASSTGCVLDGVFSELRKMRNIPDIRTVRHYHDDPGYIAALAQNVRDYWEKHGQPDKLIISFHGVPRKTLEMGDPYHCECQKTGRLLAEALELADDRYQICFQSRFGFAQWLGPYTAEILAELGKQKTGRVDVVCPGFVSDCLETLEEIALEGKAIFTEAGGGEFHYIPSLNEHPLWIEAIGNIIQTHLTGWADRRLSEEAAERSRKRALALGARE.

The Fe cation site is built by histidine 211 and glutamate 292.

The protein belongs to the ferrochelatase family.

It localises to the cytoplasm. The enzyme catalyses heme b + 2 H(+) = protoporphyrin IX + Fe(2+). It functions in the pathway porphyrin-containing compound metabolism; protoheme biosynthesis; protoheme from protoporphyrin-IX: step 1/1. In terms of biological role, catalyzes the ferrous insertion into protoporphyrin IX. This chain is Ferrochelatase, found in Nitrosomonas europaea (strain ATCC 19718 / CIP 103999 / KCTC 2705 / NBRC 14298).